A 142-amino-acid chain; its full sequence is Large ribosomal subunit protein uL16 (142 aa).

This sequence belongs to the universal ribosomal protein uL16 family. Part of the 50S ribosomal subunit.

Functionally, binds 23S rRNA and is also seen to make contacts with the A and possibly P site tRNAs. In Trichormus variabilis (strain ATCC 29413 / PCC 7937) (Anabaena variabilis), this protein is Large ribosomal subunit protein uL16.